Reading from the N-terminus, the 233-residue chain is Phytol kinase (233 aa).

Transmembrane regions (helical) follow at residues 9–29 (MALP…AVVL), 56–76 (VVLI…AGVF), 96–118 (VGRH…GGFF), 122–144 (LPIF…ALVG), 172–192 (FLVT…VLVV), and 213–233 (NLTV…LWLG).

It belongs to the polyprenol kinase family.

Its subcellular location is the cell membrane. The catalysed reaction is phytol + CTP = phytyl phosphate + CDP + H(+). The protein operates within cofactor biosynthesis; tocopherol biosynthesis. Functionally, catalyzes the CTP-dependent phosphorylation of phytol to phytylmonophosphate (PMP). Can also use UTP as an alternative phosphate donor, but not ATP or GTP. Is involved in tocopherol biosynthesis, via the utilization of phytol generated by chlorophyll degradation. Also plays a significant but not critical role in the recycling of phytol for the biosynthesis of new chlorophyll molecules. In Synechocystis sp. (strain ATCC 27184 / PCC 6803 / Kazusa), this protein is Phytol kinase.